The sequence spans 171 residues: Large ribosomal subunit protein uL10 (171 aa).

The protein belongs to the universal ribosomal protein uL10 family. As to quaternary structure, part of the ribosomal stalk of the 50S ribosomal subunit. The N-terminus interacts with L11 and the large rRNA to form the base of the stalk. The C-terminus forms an elongated spine to which L12 dimers bind in a sequential fashion forming a multimeric L10(L12)X complex.

Forms part of the ribosomal stalk, playing a central role in the interaction of the ribosome with GTP-bound translation factors. The chain is Large ribosomal subunit protein uL10 from Corynebacterium diphtheriae (strain ATCC 700971 / NCTC 13129 / Biotype gravis).